A 212-amino-acid chain; its full sequence is Ion-translocating oxidoreductase complex subunit G (212 aa).

A helical transmembrane segment spans residues 9-29 (GLLLGLFALLCTGLVAIVNQL). FMN phosphoryl threonine is present on Thr-176.

This sequence belongs to the RnfG family. As to quaternary structure, the complex is composed of six subunits: RnfA, RnfB, RnfC, RnfD, RnfE and RnfG. It depends on FMN as a cofactor.

It localises to the cell inner membrane. In terms of biological role, part of a membrane-bound complex that couples electron transfer with translocation of ions across the membrane. In Shewanella piezotolerans (strain WP3 / JCM 13877), this protein is Ion-translocating oxidoreductase complex subunit G.